The primary structure comprises 864 residues: Translation initiation factor IF-2 (864 aa).

Positions 1-252 are disordered; the sequence is MEDKNKTIKE…KTSSDKRDFS (252 aa). Residues 78–90 are compositionally biased toward basic and acidic residues; that stretch reads KEVKYEESSRKQD. A compositionally biased stretch (polar residues) spans 106 to 120; sequence VRPSGDSSYPVSRSP. Over residues 150–212 the composition is skewed to gly residues; that stretch reads RGPGQGGGYQ…PGNRSGGPGG (63 aa). Basic and acidic residues predominate over residues 239 to 252; it reads HDKEKTSSDKRDFS. The 170-residue stretch at 359–528 folds into the tr-type G domain; the sequence is NRPPVVTIMG…LLQAEVMDLK (170 aa). The G1 stretch occupies residues 368–375; it reads GHVDHGKT. Position 368-375 (368-375) interacts with GTP; that stretch reads GHVDHGKT. The interval 393-397 is G2; sequence GITQH. Positions 414–417 are G3; the sequence is DTPG. GTP-binding positions include 414–418 and 468–471; these read DTPGH and NKID. The tract at residues 468-471 is G4; it reads NKID. Residues 504–506 are G5; the sequence is SAR.

It belongs to the TRAFAC class translation factor GTPase superfamily. Classic translation factor GTPase family. IF-2 subfamily.

The protein resides in the cytoplasm. One of the essential components for the initiation of protein synthesis. Protects formylmethionyl-tRNA from spontaneous hydrolysis and promotes its binding to the 30S ribosomal subunits. Also involved in the hydrolysis of GTP during the formation of the 70S ribosomal complex. The polypeptide is Translation initiation factor IF-2 (Leptospira borgpetersenii serovar Hardjo-bovis (strain L550)).